A 403-amino-acid polypeptide reads, in one-letter code: Ribosomal RNA large subunit methyltransferase I (403 aa).

A PUA domain is found at 9-88; it reads YPRLVLSKGR…ESIDIAFFTR (80 aa).

Belongs to the methyltransferase superfamily. RlmI family.

It localises to the cytoplasm. The enzyme catalyses cytidine(1962) in 23S rRNA + S-adenosyl-L-methionine = 5-methylcytidine(1962) in 23S rRNA + S-adenosyl-L-homocysteine + H(+). Functionally, specifically methylates the cytosine at position 1962 (m5C1962) of 23S rRNA. The protein is Ribosomal RNA large subunit methyltransferase I of Salmonella typhi.